Consider the following 284-residue polypeptide: ATP phosphoribosyltransferase (284 aa).

It belongs to the ATP phosphoribosyltransferase family. Long subfamily. In terms of assembly, equilibrium between an active dimeric form, an inactive hexameric form and higher aggregates. Interconversion between the various forms is largely reversible and is influenced by the natural substrates and inhibitors of the enzyme. Mg(2+) is required as a cofactor.

The protein localises to the cytoplasm. The enzyme catalyses 1-(5-phospho-beta-D-ribosyl)-ATP + diphosphate = 5-phospho-alpha-D-ribose 1-diphosphate + ATP. It participates in amino-acid biosynthesis; L-histidine biosynthesis; L-histidine from 5-phospho-alpha-D-ribose 1-diphosphate: step 1/9. With respect to regulation, feedback inhibited by histidine. Its function is as follows. Catalyzes the condensation of ATP and 5-phosphoribose 1-diphosphate to form N'-(5'-phosphoribosyl)-ATP (PR-ATP). Has a crucial role in the pathway because the rate of histidine biosynthesis seems to be controlled primarily by regulation of HisG enzymatic activity. The protein is ATP phosphoribosyltransferase (hisG) of Mycobacterium bovis (strain ATCC BAA-935 / AF2122/97).